Reading from the N-terminus, the 118-residue chain is Large ribosomal subunit protein bL20 (118 aa).

It belongs to the bacterial ribosomal protein bL20 family.

Its function is as follows. Binds directly to 23S ribosomal RNA and is necessary for the in vitro assembly process of the 50S ribosomal subunit. It is not involved in the protein synthesizing functions of that subunit. In Thermotoga petrophila (strain ATCC BAA-488 / DSM 13995 / JCM 10881 / RKU-1), this protein is Large ribosomal subunit protein bL20.